We begin with the raw amino-acid sequence, 814 residues long: Kinesin-like protein KIF6 (814 aa).

Residues 5-345 (TIQIFARVKP…CRFAQRVALI (341 aa)) enclose the Kinesin motor domain. 97 to 104 (GQTGSGKT) contacts ATP. 3 coiled-coil regions span residues 356 to 385 (NPRL…QRTE), 456 to 494 (LKEE…EALH), and 588 to 683 (EAKA…KEFE). Positions 752–788 (LPSPCPSPHSQKQSSTSTPLEDSIPKRPVSSIPLTGD) are disordered. Over residues 759–771 (PHSQKQSSTSTPL) the composition is skewed to polar residues.

The protein belongs to the TRAFAC class myosin-kinesin ATPase superfamily. Kinesin family.

It localises to the cytoplasm. It is found in the cytoskeleton. The sequence is that of Kinesin-like protein KIF6 (KIF6) from Homo sapiens (Human).